Here is a 632-residue protein sequence, read N- to C-terminus: Basic helix-loop-helix ARNT-like protein 1 (632 aa).

The interval 1–39 (MADQRMDISSTISDFMSPGPTDLLSGSLGTSGVDCNRKR) is disordered. Ser17 is subject to Phosphoserine; by GSK3-beta. The residue at position 21 (Thr21) is a Phosphothreonine; by GSK3-beta. The short motif at 36 to 41 (NRKRKG) is the Nuclear localization signal element. The region spanning 79-132 (NAREAHSQIEKRRRDKMNSFIDELASLVPTCNAMSRKLDKLTVLRMAVQHMKTL) is the bHLH domain. Ser85 carries the phosphoserine modification. Ser97 carries the post-translational modification Phosphoserine; by CK2. Residues 149 to 159 (LSDDELKHLIL) carry the Nuclear export signal 1 motif. One can recognise a PAS 1 domain in the interval 150–222 (SDDELKHLIL…EQLSSSDTAP (73 aa)). A Glycyl lysine isopeptide (Lys-Gly) (interchain with G-Cter in SUMO2 and SUMO3) cross-link involves residue Lys259. Residue Lys266 forms a Glycyl lysine isopeptide (Lys-Gly) (interchain with G-Cter in SUMO); alternate linkage. Lys266 participates in a covalent cross-link: Glycyl lysine isopeptide (Lys-Gly) (interchain with G-Cter in SUMO2); alternate. The region spanning 333-403 (QPANGEIRVK…CHRQVLQTRE (71 aa)) is the PAS 2 domain. A Nuclear export signal 2 motif is present at residues 367-375 (LAYLPQELL). One can recognise a PAC domain in the interval 408–451 (NCYKFKIKDGSFITLRSRWFSFMNPWTKEVEYIVSTNTVVLANV). Disordered stretches follow at residues 465–498 (PPHSMDSMLPSGEGGPKRTHPTVPGIPGGTRAGA) and 517–601 (GSSP…SPSN). The interval 514–594 (RIRGSSPSSC…IGIDMIDNDQ (81 aa)) is interaction with CIART. Positions 517 to 527 (GSSPSSCGSSP) are enriched in low complexity. Lys544 is subject to N6-acetyllysine.

As to quaternary structure, component of the circadian clock oscillator which includes the CRY1/2 proteins, CLOCK or NPAS2, BMAL1 or BMAL2, CSNK1D and/or CSNK1E, TIMELESS and the PER1/2/3 proteins. Forms a heterodimer with CLOCK. The CLOCK-BMAL1 heterodimer is required for E-box-dependent transactivation, for CLOCK nuclear translocation and degradation, and, for phosphorylation of both CLOCK and BMAL1. Part of a nuclear complex which also includes RACK1 and PRKCA; RACK1 and PRKCA are recruited to the complex in a circadian manner. Interacts with NPAS2. Interacts with EZH2. Interacts with SUMO3. Interacts with SIRT1. Interacts with AHR. Interacts with ID1, ID2 and ID3. Interacts with DDX4. Interacts with OGT. Interacts with EED and SUZ12. Interacts with MTA1. Interacts with CIART. Interacts with HSP90. Interacts with KAT2B and EP300. Interacts with BHLHE40/DEC1 and BHLHE41/DEC2. Interacts with RELB and the interaction is enhanced in the presence of CLOCK. Interacts with PER1, PER2, CRY1 and CRY2 and this interaction requires a translocation to the nucleus. Interaction of the CLOCK-BMAL1 heterodimer with PER or CRY inhibits transcription activation. Interaction of the CLOCK-BMAL1 with CRY1 is independent of DNA but with PER2 is off DNA. The CLOCK-BMAL1 heterodimer interacts with GSK3B. Interacts with KDM5A. Interacts with KMT2A; in a circadian manner. Interacts with UBE3A. Interacts with PRKCG. Interacts with MAGEL2. Interacts with NCOA2. Interacts with THRAP3. The CLOCK-BMAL1 heterodimer interacts with PASD1. Interacts with PASD1. Interacts with USP9X. Interacts with PIWIL2 (via PIWI domain). Interacts with HDAC3. Interacts with HNF4A. In terms of processing, ubiquitinated, leading to its proteasomal degradation. Deubiquitinated by USP9X. O-glycosylated; contains O-GlcNAc. O-glycosylation by OGT prevents protein degradation by inhibiting ubiquitination. It also stabilizes the CLOCK-BMAL1 heterodimer thereby increasing CLOCK-BMAL1-mediated transcription of genes in the negative loop of the circadian clock such as PER1/2/3 and CRY1/2. Post-translationally, acetylated on Lys-544 by CLOCK during the repression phase of the circadian cycle. Acetylation facilitates recruitment of CRY1 protein and initiates the repression phase of the circadian cycle. Acetylated at Lys-544 by KAT5 during the activation phase of the cycle, leading to recruitment of the positive transcription elongation factor b (P-TEFb) and BRD4, followed by productive elongation of circadian transcripts. Deacetylated by SIRT1, which may result in decreased protein stability. In terms of processing, phosphorylated upon dimerization with CLOCK. Phosphorylation enhances the transcriptional activity, alters the subcellular localization and decreases the stability of the CLOCK-BMAL1 heterodimer by promoting its degradation. Phosphorylation shows circadian variations in the liver with a peak between CT10 to CT14. Phosphorylation at Ser-97 by CK2 is essential for its nuclear localization, its interaction with CLOCK and controls CLOCK nuclear entry. Dephosphorylation at Ser-85 is important for dimerization with CLOCK and transcriptional activity. Sumoylated on Lys-266 upon dimerization with CLOCK. Predominantly conjugated to poly-SUMO2/3 rather than SUMO1 and the level of these conjugates undergo rhythmic variation, peaking at CT9-CT12. Sumoylation localizes it exclusively to the PML body and promotes its ubiquitination in the PML body, ubiquitin-dependent proteasomal degradation and the transcriptional activity of the CLOCK-BMAL1 heterodimer. Post-translationally, undergoes lysosome-mediated degradation in a time-dependent manner in the liver. Expressed in liver and testis (at protein level). Expressed in the suprachiasmatic nucleus (SCN) in a circadian manner.

The protein localises to the nucleus. It localises to the cytoplasm. The protein resides in the PML body. Its activity is regulated as follows. The redox state of the cell can modulate the transcriptional activity of the CLOCK-BMAL1 and NPAS2-BMAL1 heterodimers; NADH and NADPH enhance the DNA-binding activity of the heterodimers. In terms of biological role, transcriptional activator which forms a core component of the circadian clock. The circadian clock, an internal time-keeping system, regulates various physiological processes through the generation of approximately 24 hour circadian rhythms in gene expression, which are translated into rhythms in metabolism and behavior. It is derived from the Latin roots 'circa' (about) and 'diem' (day) and acts as an important regulator of a wide array of physiological functions including metabolism, sleep, body temperature, blood pressure, endocrine, immune, cardiovascular, and renal function. Consists of two major components: the central clock, residing in the suprachiasmatic nucleus (SCN) of the brain, and the peripheral clocks that are present in nearly every tissue and organ system. Both the central and peripheral clocks can be reset by environmental cues, also known as Zeitgebers (German for 'timegivers'). The predominant Zeitgeber for the central clock is light, which is sensed by retina and signals directly to the SCN. The central clock entrains the peripheral clocks through neuronal and hormonal signals, body temperature and feeding-related cues, aligning all clocks with the external light/dark cycle. Circadian rhythms allow an organism to achieve temporal homeostasis with its environment at the molecular level by regulating gene expression to create a peak of protein expression once every 24 hours to control when a particular physiological process is most active with respect to the solar day. Transcription and translation of core clock components (CLOCK, NPAS2, BMAL1, BMAL2, PER1, PER2, PER3, CRY1 and CRY2) plays a critical role in rhythm generation, whereas delays imposed by post-translational modifications (PTMs) are important for determining the period (tau) of the rhythms (tau refers to the period of a rhythm and is the length, in time, of one complete cycle). A diurnal rhythm is synchronized with the day/night cycle, while the ultradian and infradian rhythms have a period shorter and longer than 24 hours, respectively. Disruptions in the circadian rhythms contribute to the pathology of cardiovascular diseases, cancer, metabolic syndromes and aging. A transcription/translation feedback loop (TTFL) forms the core of the molecular circadian clock mechanism. Transcription factors, CLOCK or NPAS2 and BMAL1 or BMAL2, form the positive limb of the feedback loop, act in the form of a heterodimer and activate the transcription of core clock genes and clock-controlled genes (involved in key metabolic processes), harboring E-box elements (5'-CACGTG-3') within their promoters. The core clock genes: PER1/2/3 and CRY1/2 which are transcriptional repressors form the negative limb of the feedback loop and interact with the CLOCK|NPAS2-BMAL1|BMAL2 heterodimer inhibiting its activity and thereby negatively regulating their own expression. This heterodimer also activates nuclear receptors NR1D1/2 and RORA/B/G, which form a second feedback loop and which activate and repress BMAL1 transcription, respectively. BMAL1 positively regulates myogenesis and negatively regulates adipogenesis via the transcriptional control of the genes of the canonical Wnt signaling pathway. Plays a role in normal pancreatic beta-cell function; regulates glucose-stimulated insulin secretion via the regulation of antioxidant genes NFE2L2/NRF2 and its targets SESN2, PRDX3, CCLC and CCLM. Negatively regulates the mTORC1 signaling pathway; regulates the expression of MTOR and DEPTOR. Controls diurnal oscillations of Ly6C inflammatory monocytes; rhythmic recruitment of the PRC2 complex imparts diurnal variation to chemokine expression that is necessary to sustain Ly6C monocyte rhythms. Regulates the expression of HSD3B2, STAR, PTGS2, CYP11A1, CYP19A1 and LHCGR in the ovary and also the genes involved in hair growth. Plays an important role in adult hippocampal neurogenesis by regulating the timely entry of neural stem/progenitor cells (NSPCs) into the cell cycle and the number of cell divisions that take place prior to cell-cycle exit. Regulates the circadian expression of CIART and KLF11. The CLOCK-BMAL1 heterodimer regulates the circadian expression of SERPINE1/PAI1, VWF, B3, CCRN4L/NOC, NAMPT, DBP, MYOD1, PPARGC1A, PPARGC1B, SIRT1, GYS2, F7, NGFR, GNRHR, BHLHE40/DEC1, ATF4, MTA1, KLF10 and also genes implicated in glucose and lipid metabolism. Promotes rhythmic chromatin opening, regulating the DNA accessibility of other transcription factors. May play a role in spermatogenesis; contributes to the chromatoid body assembly and physiology. The NPAS2-BMAL1 heterodimer positively regulates the expression of MAOA, F7 and LDHA and modulates the circadian rhythm of daytime contrast sensitivity by regulating the rhythmic expression of adenylate cyclase type 1 (ADCY1) in the retina. The preferred binding motif for the CLOCK-BMAL1 heterodimer is 5'-CACGTGA-3', which contains a flanking adenine nucleotide at the 3-prime end of the canonical 6-nucleotide E-box sequence. CLOCK specifically binds to the half-site 5'-CAC-3', while BMAL1 binds to the half-site 5'-GTGA-3'. The CLOCK-BMAL1 heterodimer also recognizes the non-canonical E-box motifs 5'-AACGTGA-3' and 5'-CATGTGA-3'. Essential for the rhythmic interaction of CLOCK with ASS1 and plays a critical role in positively regulating CLOCK-mediated acetylation of ASS1. Plays a role in protecting against lethal sepsis by limiting the expression of immune checkpoint protein CD274 in macrophages in a PKM2-dependent manner. Regulates the diurnal rhythms of skeletal muscle metabolism via transcriptional activation of genes promoting triglyceride synthesis (DGAT2) and metabolic efficiency (COQ10B). In Mus musculus (Mouse), this protein is Basic helix-loop-helix ARNT-like protein 1 (Bmal1).